Here is a 294-residue protein sequence, read N- to C-terminus: MSDDPSTNDALGTLRAAIKQAVTDVRGQTPLAQSFTNFVTINLVANAQLAAGGTAAMSYLPDDVIATAEIAGSNYINVGTLLPFFKNALPEIARKLHENGKTWVLDPVAAGIGETRTAILESFRDVPPTIVRGNASEIIALDAMWGLADADSTTPATRPAGVEAVDEVDAAVDAAKRLARHLAKRSPVGAGAVAVSGAVDLVTDGERTFRLPGGSAMMTKITGAGCSLGGVTATYLAVAEPLVAALAASLLYDRASEIAEVKSDGPGSFQVALLDALWNVTADQVAASDIIETN.

Met-57 contributes to the substrate binding site. 2 residues coordinate ATP: Arg-132 and Ser-196. A substrate-binding site is contributed by Gly-223.

Belongs to the Thz kinase family. Mg(2+) is required as a cofactor.

It catalyses the reaction 5-(2-hydroxyethyl)-4-methylthiazole + ATP = 4-methyl-5-(2-phosphooxyethyl)-thiazole + ADP + H(+). It functions in the pathway cofactor biosynthesis; thiamine diphosphate biosynthesis; 4-methyl-5-(2-phosphoethyl)-thiazole from 5-(2-hydroxyethyl)-4-methylthiazole: step 1/1. Catalyzes the phosphorylation of the hydroxyl group of 4-methyl-5-beta-hydroxyethylthiazole (THZ). In Bifidobacterium adolescentis (strain ATCC 15703 / DSM 20083 / NCTC 11814 / E194a), this protein is Hydroxyethylthiazole kinase.